A 502-amino-acid chain; its full sequence is MSNEEKNLMNEEQEFNQLIQERRQKFFDLQAEGKDPFEVTKVERTHTSEEIKSNFEELEDKEVTVAGRLMSKRVHGKAGFSDIHDRYGKIQLYIKINDVGEERLKEYKSFDIGDFVTITGTVFKTRTGEVSIHITDFKLIAKSLKPLPEKWHGLKDPDLRYRQRYVDLIVNEDVRDTFMKRTKIIKYMREFLDAKDYIEVETPVLSPIAGGAAARPFTTHHNALDIDMYLRIATELYLKRLIVGGFEKVYEIGKNFRNEGIDIRHNPEFTMIELYEAYADYNDMMEITENMVAYIAEKVCGNTKVKYEETEIEFRPPWKRITMVDSVKEYSGVDFNEIKTDEEARELVKGKDFELKKKLEDCTKADILNLFFEEYVEKNLIQPTFVCDYPVEISPLSKKKNDNPEYTERFEGFVYGRELCNAYTELNDPIVQKERFIQQLKERELGDDEAFMMDEDFINALEIGMPPTGGLGIGVDRLVMFLTDSHSIRDVILFPTMKPTHN.

Positions 411 and 418 each coordinate Mg(2+).

This sequence belongs to the class-II aminoacyl-tRNA synthetase family. Homodimer. Requires Mg(2+) as cofactor.

It is found in the cytoplasm. It catalyses the reaction tRNA(Lys) + L-lysine + ATP = L-lysyl-tRNA(Lys) + AMP + diphosphate. The protein is Lysine--tRNA ligase of Clostridium tetani (strain Massachusetts / E88).